The sequence spans 189 residues: Ribonuclease HII (189 aa).

Residues 1–189 enclose the RNase H type-2 domain; the sequence is MIAGVDEAGR…PVRRALNIDC (189 aa). A divalent metal cation contacts are provided by aspartate 6, glutamate 7, and aspartate 98.

It belongs to the RNase HII family. It depends on Mn(2+) as a cofactor. Mg(2+) serves as cofactor.

Its subcellular location is the cytoplasm. The enzyme catalyses Endonucleolytic cleavage to 5'-phosphomonoester.. Functionally, endonuclease that specifically degrades the RNA of RNA-DNA hybrids. The protein is Ribonuclease HII of Acinetobacter baylyi (strain ATCC 33305 / BD413 / ADP1).